Reading from the N-terminus, the 504-residue chain is MEGRAAGWVRVAAVGWAVAACAVAAGMVARRGAARVRWNRAVAVVRDLEERCATPAELLQRVVNSLAIEMFAGLASDGGSKVRMLLTCVDALPDGSEEGISYAIDLGGTSFRVLKVELGAGSTIINRKVEHQPIPENLTKGTSDDLFNFIASALKNFIEREGGEVEGRALGFTFSFPVRQTSISSGTLIRWTKEFSIEEAVGKDVAQCLNEALARNGLNMKVNVLVNNTVGTLALGHYYDDDTVAAVIIGAGTNACYIERNDAIIKSLGRVTNSERTVVNVEWGSFRPPQIELTPYDICFNNETWNYYDQGFEKMISGVYLGEIARLVFQKMAEESDIFGTAVDGLSTPFVLSTPNLAAIREDDSPDLREVGKILEEHLKLPDVPLKTRKLVARVSDIITRRAARLAAAAIVAILQKIGCDGTLCGSTQVRTMRGVRRRTVVAIEGGLFEGYSVFREYLNEALVEILGEEIAATVSLRVMEEGSGTGAALLAAAYSSARQKNSE.

The helical transmembrane segment at 7 to 29 (GWVRVAAVGWAVAACAVAAGMVA) threads the bilayer. One can recognise a Hexokinase domain in the interval 39-493 (NRAVAVVRDL…SGTGAALLAA (455 aa)). Positions 94-226 (DGSEEGISYA…GLNMKVNVLV (133 aa)) are hexokinase small subdomain. 2 residues coordinate ADP: Gly-108 and Thr-109. Residues Thr-192, Lys-193, Asn-227, Asn-254, Glu-282, and Glu-313 each contribute to the D-glucose site. The segment at 227-482 (NNTVGTLALG…ATVSLRVMEE (256 aa)) is hexokinase large subdomain. Residue Gly-447 participates in ADP binding.

Belongs to the hexokinase family. Expressed specifically in stamen.

It is found in the plastid. Its subcellular location is the chloroplast outer membrane. The enzyme catalyses a D-hexose + ATP = a D-hexose 6-phosphate + ADP + H(+). The catalysed reaction is D-fructose + ATP = D-fructose 6-phosphate + ADP + H(+). It catalyses the reaction D-glucose + ATP = D-glucose 6-phosphate + ADP + H(+). It functions in the pathway carbohydrate metabolism; hexose metabolism. Its pathway is carbohydrate degradation; glycolysis; D-glyceraldehyde 3-phosphate and glycerone phosphate from D-glucose: step 1/4. Functionally, fructose and glucose phosphorylating enzyme. The chain is Hexokinase-10 (HXK10) from Oryza sativa subsp. japonica (Rice).